A 122-amino-acid chain; its full sequence is Antitoxin protein TsiV3 (122 aa).

Residues 1 to 24 (MNNLLSAYVTMLLILLSISGGAIA) form the signal peptide. 2 disulfide bridges follow: C28–C41 and C82–C100.

In terms of assembly, homodimer; dimerization is critical for inhibitory activity. Forms a heterotetramer with VgrG3 composed of one TsiV3 homodimer and two VgrG3 molecules.

In terms of biological role, immunity protein that plays a role in preventing early activation of toxin VgrG3. The chain is Antitoxin protein TsiV3 from Vibrio cholerae serotype O1 (strain ATCC 39315 / El Tor Inaba N16961).